We begin with the raw amino-acid sequence, 452 residues long: Mitochondrial import inner membrane translocase subunit TIM44 (452 aa).

Phosphothreonine is present on Thr-128. 166–173 serves as a coordination point for ATP; the sequence is GGEKLGRT. Ser-180 bears the Phosphoserine mark. Lys-217 carries the post-translational modification N6-succinyllysine.

The protein belongs to the Tim44 family. Probable component of the PAM complex at least composed of a mitochondrial HSP70 protein, GRPEL1 or GRPEL2, TIMM44, TIMM16/PAM16 and TIMM14/DNAJC19. The complex interacts with the TIMM23 component of the TIM23 complex. Interacts with SLC25A4/ANT1 and SLC25A5/ANT2; leading to inhibit the presequence translocase TIMM23, thereby promoting stabilization of PINK1.

The protein localises to the mitochondrion inner membrane. Its subcellular location is the mitochondrion matrix. Functionally, essential component of the PAM complex, a complex required for the translocation of transit peptide-containing proteins from the inner membrane into the mitochondrial matrix in an ATP-dependent manner. Recruits mitochondrial HSP70 to drive protein translocation into the matrix using ATP as an energy source. This chain is Mitochondrial import inner membrane translocase subunit TIM44 (TIMM44), found in Homo sapiens (Human).